Here is a 170-residue protein sequence, read N- to C-terminus: Adenine phosphoribosyltransferase (170 aa).

Belongs to the purine/pyrimidine phosphoribosyltransferase family. As to quaternary structure, homodimer.

It is found in the cytoplasm. It catalyses the reaction AMP + diphosphate = 5-phospho-alpha-D-ribose 1-diphosphate + adenine. It participates in purine metabolism; AMP biosynthesis via salvage pathway; AMP from adenine: step 1/1. Its function is as follows. Catalyzes a salvage reaction resulting in the formation of AMP, that is energically less costly than de novo synthesis. This is Adenine phosphoribosyltransferase from Streptococcus pneumoniae (strain Hungary19A-6).